The primary structure comprises 265 residues: MRKAGHCPALFLLLRVPGRPHSFDLARAASDQLGRLGNARSAGAKRDDAVVHAGVTFAAGVAAGGLRQLDTLTLTLAPILVVVAGHLQGELQKHVLDGFQNDFRHSVRLGGQLRQVHHARHGQLGPFGPDRRNQALGLGQRQAADAVDLLRNDDFTRLQVRDHAQQLGPVGACAGRLLAVDAGDVVPGGPRGRYKALLAFKILLVRTGAQVDAGDLQPSSLRLLLSRRHFHGSTACGSDQRPTRLPRASCSSRSISGSAARPWKR.

Residues 233–265 (STACGSDQRPTRLPRASCSSRSISGSAARPWKR) are disordered. Residues 247–265 (RASCSSRSISGSAARPWKR) show a composition bias toward low complexity.

This is an uncharacterized protein from Escherichia coli.